The chain runs to 481 residues: Protein NRT1/ PTR FAMILY 1.3 (481 aa).

12 helical membrane-spanning segments follow: residues 32–52, 57–77, 88–108, 124–144, 173–193, 202–222, 259–279, 302–322, 333–353, 374–394, 422–442, and 451–471; these read LAYF…YGMG, ANIL…GAFI, IGFG…TTII, LLKS…AGGV, FNWY…LLVF, IGFG…FAAS, IWST…FIVL, IFLV…IVPL, LGVM…ISAL, AMWL…NTIA, ASLI…GSWI, and LDYY…YFVW.

This sequence belongs to the major facilitator superfamily. Proton-dependent oligopeptide transporter (POT/PTR) (TC 2.A.17) family. Expressed in roots.

The protein resides in the membrane. The polypeptide is Protein NRT1/ PTR FAMILY 1.3 (NPF1.3) (Arabidopsis thaliana (Mouse-ear cress)).